Reading from the N-terminus, the 183-residue chain is uncharacterized protein (183 aa).

It belongs to the asfivirus S183L family.

This is an uncharacterized protein from Ornithodoros (relapsing fever ticks).